The primary structure comprises 180 residues: Large ribosomal subunit protein uL6 (180 aa).

Belongs to the universal ribosomal protein uL6 family. In terms of assembly, part of the 50S ribosomal subunit.

Functionally, this protein binds to the 23S rRNA, and is important in its secondary structure. It is located near the subunit interface in the base of the L7/L12 stalk, and near the tRNA binding site of the peptidyltransferase center. This Mesoplasma florum (strain ATCC 33453 / NBRC 100688 / NCTC 11704 / L1) (Acholeplasma florum) protein is Large ribosomal subunit protein uL6.